The primary structure comprises 375 residues: Heat shock protein 42 (375 aa).

Disordered regions lie at residues 21–59 (TGQRGQQGYPRQPQRPQRYHPHYGQVHVGGHHPRHHPLY), 81–127 (SPEY…YYHC), 154–238 (PYEG…ETRM), and 347–375 (PKPKKRIAIEEIPDEELEFEENPNPTVEN). Positions 22 to 48 (GQRGQQGYPRQPQRPQRYHPHYGQVHV) are enriched in low complexity. The segment covering 49 to 58 (GGHHPRHHPL) has biased composition (basic residues). 2 stretches are compositionally biased toward acidic residues: residues 85–101 (GYDDEDGEEEDQDEDMV) and 158–168 (TEPEIEANTEQ). A compositionally biased stretch (basic and acidic residues) spans 169–197 (EGEKGEEKDKKDKSEAPKEEAGETNKEKP). 5 positions are modified to phosphoserine: Ser182, Ser213, Ser214, Ser215, and Ser223. One can recognise a sHSP domain in the interval 237 to 356 (RMDLPFSPEV…PKPKKRIAIE (120 aa)). The span at 357 to 367 (EIPDEELEFEE) shows a compositional bias: acidic residues.

It belongs to the small heat shock protein (HSP20) family. Forms oligomeric complexes. Interacts with itself.

The protein is Heat shock protein 42 (HSP42) of Saccharomyces cerevisiae (strain ATCC 204508 / S288c) (Baker's yeast).